The primary structure comprises 1405 residues: DNA-directed RNA polymerase subunit beta' (1405 aa).

4 residues coordinate Zn(2+): cysteine 70, cysteine 72, cysteine 85, and cysteine 88. Mg(2+) is bound by residues aspartate 460, aspartate 462, and aspartate 464. Zn(2+) contacts are provided by cysteine 814, cysteine 888, cysteine 895, and cysteine 898.

It belongs to the RNA polymerase beta' chain family. In terms of assembly, the RNAP catalytic core consists of 2 alpha, 1 beta, 1 beta' and 1 omega subunit. When a sigma factor is associated with the core the holoenzyme is formed, which can initiate transcription. It depends on Mg(2+) as a cofactor. Requires Zn(2+) as cofactor.

It carries out the reaction RNA(n) + a ribonucleoside 5'-triphosphate = RNA(n+1) + diphosphate. In terms of biological role, DNA-dependent RNA polymerase catalyzes the transcription of DNA into RNA using the four ribonucleoside triphosphates as substrates. This is DNA-directed RNA polymerase subunit beta' from Shewanella sp. (strain ANA-3).